Here is a 482-residue protein sequence, read N- to C-terminus: MIKVSNALQRILIGAALALFGGGAQAAAADSAAAAEKAPPKIEARNDRFAAPHPDQYASWKATAEQSEISDALAEDPRLVILWAGYAFAKDYNKPRGHAYALTDVRETLRTGAPMKPEDGPQPMACWSCKSPDVARVIAEQGEAAYFHGMWARGGPEIVNALGCADCHNTASDDFAAGKPALQLSRPYAARALEAIGKPFDKANRIDQQSMVCGQCHVEYYFSGKDKTVKFPWDQGTSVDEIEAYYDGIAFTDWVNPLSKAPMLKAQHPDYETWRAGIHGQNNISCVDCHMPKVQNAEGKLYTSHKIGNPFDSFEQTCRTCHTQDKATLQQTVAKRKQDVNEIKLKVEDQLVRAHFEAKAAWAAGASEAEMQPILTDIRHAQWRWDFSIASHGVHMHAPDVALRMLGTALDKAANARTQLVRVLANHGVNDAVPLPDISTKALAQQALGMNMQQFTQEKQTFLNTVVPEWEAQARSAGRLDH.

An N-terminal signal peptide occupies residues 1–26 (MIKVSNALQRILIGAALALFGGGAQA). A heme c-binding site is contributed by H98. Residues C126, C129, and K130 each contribute to the heme site. Positions 164, 167, 168, 213, 216, and 217 each coordinate heme c. E219, Y220, K265, and Q267 together coordinate Ca(2+). Y220 provides a ligand contact to substrate. Position 268 (H268) interacts with substrate. H279, C286, C289, H290, H305, C318, C321, H322, and H397 together coordinate heme c.

Belongs to the cytochrome c-552 family. The cofactor is Ca(2+). Heme c serves as cofactor.

The protein localises to the periplasm. The catalysed reaction is 6 Fe(III)-[cytochrome c] + NH4(+) + 2 H2O = 6 Fe(II)-[cytochrome c] + nitrite + 8 H(+). Its pathway is nitrogen metabolism; nitrate reduction (assimilation). Catalyzes the reduction of nitrite to ammonia, consuming six electrons in the process. The protein is Cytochrome c-552 of Edwardsiella ictaluri (strain 93-146).